The primary structure comprises 100 residues: Small ribosomal subunit protein uS14c (100 aa).

It belongs to the universal ribosomal protein uS14 family. In terms of assembly, part of the 30S ribosomal subunit.

The protein localises to the plastid. Its subcellular location is the chloroplast. Functionally, binds 16S rRNA, required for the assembly of 30S particles. The protein is Small ribosomal subunit protein uS14c of Pisum sativum (Garden pea).